A 149-amino-acid chain; its full sequence is 3-dehydroquinate dehydratase (149 aa).

Tyr-26 acts as the Proton acceptor in catalysis. Residues Asn-77, His-83, and Asp-90 each coordinate substrate. The Proton donor role is filled by His-103. Residues 104-105 and Arg-114 each bind substrate; that span reads LS.

Belongs to the type-II 3-dehydroquinase family. As to quaternary structure, homododecamer.

The enzyme catalyses 3-dehydroquinate = 3-dehydroshikimate + H2O. The protein operates within metabolic intermediate biosynthesis; chorismate biosynthesis; chorismate from D-erythrose 4-phosphate and phosphoenolpyruvate: step 3/7. In terms of biological role, catalyzes a trans-dehydration via an enolate intermediate. This Aeromonas hydrophila subsp. hydrophila (strain ATCC 7966 / DSM 30187 / BCRC 13018 / CCUG 14551 / JCM 1027 / KCTC 2358 / NCIMB 9240 / NCTC 8049) protein is 3-dehydroquinate dehydratase.